Here is a 74-residue protein sequence, read N- to C-terminus: Chitinases 70, 30, and 20.5 kDa (74 aa).

The interval 1-27 is N-terminus of 70 kDa chitinase; sequence XTSATATYAKTQDWGSCFEGKWTIKNT. The N-terminus of 30 kDa chitinase stretch occupies residues 28–52; it reads AACSSYPSWVAGRSYAAGDIVYYTD. The interval 53 to 74 is N-terminus of 20.5 kDa chitinase; that stretch reads XGYTDLPVSRQKMCQNGMVTNC.

The protein belongs to the glycosyl hydrolase 18 family. Chitinase class II subfamily. As to quaternary structure, homodimer, but homotrimers and homotetramers could be observed for the 20.5 and 30 kDa chitinases. Post-translationally, the 70 kDa chitinase is probably the precursor protein of the 30 and 20.5 kDa chitinases.

It carries out the reaction Random endo-hydrolysis of N-acetyl-beta-D-glucosaminide (1-&gt;4)-beta-linkages in chitin and chitodextrins.. Its function is as follows. Able to cleave chitin oligomers from N=3 to 6. This Streptomyces olivaceoviridis (Streptomyces corchorusii) protein is Chitinases 70, 30, and 20.5 kDa.